A 777-amino-acid polypeptide reads, in one-letter code: Rho guanine nucleotide exchange factor 38 (777 aa).

T34 carries the phosphothreonine modification. Residues 35–72 (DTVVESSVSGDHSGTLRRSQSDRTEYNQKLQEKMTPQG) form a disordered region. The span at 37–52 (VVESSVSGDHSGTLRR) shows a compositional bias: polar residues. A compositionally biased stretch (basic and acidic residues) spans 53-66 (SQSDRTEYNQKLQE). The DH domain maps to 94–285 (KREKIIKELI…KDINVNINEL (192 aa)). Positions 327–536 (LKILTRGESQ…QNQVLEEIQN (210 aa)) constitute a BAR domain. The 64-residue stretch at 582 to 645 (SAEELYQAKR…YSSFLKPYNP (64 aa)) folds into the SH3 1 domain. Positions 673-694 (PASDSVTGTSESSIGDSSSSLS) are disordered. A compositionally biased stretch (low complexity) spans 679 to 694 (TGTSESSIGDSSSSLS). The SH3 2 domain maps to 713–776 (VDEQIFYAVH…PANYLGKMTY (64 aa)).

Its function is as follows. May act as a guanine-nucleotide releasing factor. In Homo sapiens (Human), this protein is Rho guanine nucleotide exchange factor 38 (ARHGEF38).